A 357-amino-acid chain; its full sequence is MFAKLESLERKYEDLERQLSAPDVVSDQERFRKLSKTHSDLSDVVAAFREYKKIAQDLEDNQEMAQDPDPEIRELAQAETKALKEAQVELEARLKVLLLPKDPMDEKNILLEIRAGTGGDEAALFAGDLFRMYTRYAETKRWKVEIMSQSETGSGGFKEVIASISGDKVYSRLKYESGAHRVQRVPATESQGRIHTSAVTVAIMPEAEEVDVAIDPNELRIDVYRSSGPGGQSVNTTDSAVRVTHIPSGLVVICQDEKSQHKNKAKALKVLRSRLLQVEQDKQRAEQEAARRSQVGTGDRSERIRTYNFPQGRVTDHRINLTLYRLDAVLEGDLDELCGALIGHYQAEALKAQADAA.

Gln-232 bears the N5-methylglutamine mark. Residues Lys-282–Arg-291 are compositionally biased toward basic and acidic residues. The segment at Lys-282–Glu-302 is disordered.

It belongs to the prokaryotic/mitochondrial release factor family. Methylated by PrmC. Methylation increases the termination efficiency of RF1.

The protein resides in the cytoplasm. Its function is as follows. Peptide chain release factor 1 directs the termination of translation in response to the peptide chain termination codons UAG and UAA. The sequence is that of Peptide chain release factor 1 from Solidesulfovibrio magneticus (strain ATCC 700980 / DSM 13731 / RS-1) (Desulfovibrio magneticus).